Here is a 2150-residue protein sequence, read N- to C-terminus: A disintegrin and metalloproteinase with thrombospondin motifs gon-1 (2150 aa).

Residues 1 to 28 form the signal peptide; sequence MRSIGGSFHLLQPVVAALILLVVCLVYA. A propeptide spanning residues 29–273 is cleaved from the precursor; it reads LQSGSGTISE…VIERKARSRR (245 aa). 4 N-linked (GlcNAc...) asparagine glycosylation sites follow: Asn134, Asn213, Asn243, and Asn248. The Peptidase M12B domain occupies 280–493; that stretch reads HYVEVLVVAD…GQTQCLFDQP (214 aa). 2 disulfide bridges follow: Cys402–Cys488 and Cys440–Cys470. Position 424 (His424) interacts with Zn(2+). Glu425 is an active-site residue. The Zn(2+) site is built by His428 and His434. Residues 503–587 form the Disintegrin domain; it reads FVRDEPGKKY…RLAPESLTKI (85 aa). The TSP type-1 1 domain maps to 588 to 643; sequence DGQWGDWRSWGECSRTCGGGVQKGLRDCDSPKPRNGGKYCVGQRERYRSCNTQECP. Intrachain disulfides connect Cys600-Cys637, Cys604-Cys642, and Cys615-Cys627. An N-linked (GlcNAc...) asparagine glycan is attached at Asn842. TSP type-1 domains are found at residues 943–1003, 1004–1057, 1060–1115, 1116–1165, 1168–1227, 1228–1277, 1280–1339, 1352–1409, 1410–1469, 1474–1524, and 1527–1585; these read CSTR…IDCS, GRKW…RECN, PCPR…HACT, WWQF…KPCH, SCPK…GTCP, FWRN…QTCH, PCTS…DTCD, PPIR…RDCS, YWKM…EPCP, HIGS…ELCP, and TNNS…PPCR. N-linked (GlcNAc...) asparagine glycosylation is found at Asn1139 and Asn1199. Asn1370 and Asn1432 each carry an N-linked (GlcNAc...) asparagine glycan. Residues Asn1528, Asn1590, Asn1606, and Asn1654 are each glycosylated (N-linked (GlcNAc...) asparagine). The tract at residues 1590 to 1614 is disordered; sequence NKTSSASMTSLSSSNSNTTSSASAS. The span at 1592–1614 shows a compositional bias: low complexity; the sequence is TSSASMTSLSSSNSNTTSSASAS. TSP type-1 domains are found at residues 1621–1675, 1678–1736, 1737–1793, 1794–1866, and 1867–1924; these read PVVS…VRCR, HCPR…VACP, AYRW…DTSN, CPYE…NPCD, and SEFK…RNCL. Disulfide bonds link Cys1679–Cys1718, Cys1690–Cys1694, Cys1690–Cys1730, Cys1694–Cys1735, Cys1705–Cys1718, and Cys1730–Cys1735. Residues Asn1828 and Asn1855 are each glycosylated (N-linked (GlcNAc...) asparagine). One can recognise a GON domain in the interval 1924–2123; it reads LPSTCQELKS…RYKGLIFEVN (200 aa). Residues Asn1942, Asn1960, and Asn1997 are each glycosylated (N-linked (GlcNAc...) asparagine).

It depends on Zn(2+) as a cofactor. Expressed by the gonadal distal tip cells (DTCs). Expressed in muscles, including body wall, vulval and anal depressor muscles. Expressed in motor neurons and in ASI and ASJ neurons.

Its subcellular location is the secreted. The protein localises to the extracellular space. The protein resides in the extracellular matrix. It is found in the basement membrane. It localises to the endoplasmic reticulum. Its subcellular location is the golgi apparatus. Functionally, secreted metalloprotease required for distal tip cell (DTC) migration along the body wall basement membranes, a key step that promotes gonad morphogenesis. Probably acts by remodeling the basement membrane during cell migration. Required to restrict presynaptic growth at the neuromuscular junctions (NMJ) in late larval stage and in adult motor neurons, probably by controlling collagen IV emb-9 degradation, a component of the synapse basement membrane. Also involved in the organization of adult muscle morphology. Has a protease-independent function in promoting the transport from the endoplasmic reticulum to the Golgi apparatus of a variety of secretory cargos. Required for the secretion of insulin-like peptide ins-7, daf-28 and ins-18 and TGF beta-like protein daf-7. In peripheral tissues, negatively regulates insulin-mediated daf-16 translocation and thereby negatively regulates lifespan and dauer formation. The protein is A disintegrin and metalloproteinase with thrombospondin motifs gon-1 of Caenorhabditis elegans.